A 70-amino-acid chain; its full sequence is uncharacterized protein (70 aa).

This is an uncharacterized protein from Bacillus subtilis (strain 168).